Consider the following 448-residue polypeptide: Zinc finger and BTB domain-containing protein 44 (448 aa).

Residues 31–98 form the BTB domain; that stretch reads CDITIRVQDK…AYTATLSINT (68 aa). Residues 289 to 298 are compositionally biased toward basic and acidic residues; that stretch reads LSDEEVHEEV. The segment at 289–320 is disordered; sequence LSDEEVHEEVSQPVSASQSSMSDQQTVPGSEQ. Over residues 299-313 the composition is skewed to low complexity; the sequence is SQPVSASQSSMSDQQ. C2H2-type zinc fingers lie at residues 394–416 and 422–444; these read FQCP…MLIH and FQCD…RLKH.

It localises to the nucleus. This is Zinc finger and BTB domain-containing protein 44 (zbtb44) from Xenopus tropicalis (Western clawed frog).